Here is a 699-residue protein sequence, read N- to C-terminus: Ubiquitin-like modifier-activating enzyme ATG7 (699 aa).

The GXGXXG motif signature appears at 370 to 375; sequence GAGTLG. The active-site Glycyl thioester intermediate is the C550. Positions 653–691 are homodimerization; the sequence is ALASRDYVAELSGLAEVQRLAEKAAAEMQWSEDEEGMGE.

This sequence belongs to the ATG7 family. As to quaternary structure, homodimer. Interacts with ATG8 through a thioester bond between Cys-550 and the C-terminal Gly of ATG8 and with ATG12 through a thioester bond between Cys-550 and the C-terminal Gly of ATG12. Also interacts with ATG3.

It localises to the cytoplasm. The protein resides in the preautophagosomal structure. E1-like activating enzyme involved in the 2 ubiquitin-like systems required for cytoplasm to vacuole transport (Cvt) and autophagy. Activates ATG12 for its conjugation with ATG5 and ATG8 for its conjugation with phosphatidylethanolamine. Both systems are needed for the ATG8 association to Cvt vesicles and autophagosomes membranes. Autophagy is essential for maintenance of amino acid levels and protein synthesis under nitrogen starvation. Required for selective autophagic degradation of the nucleus (nucleophagy) as well as for mitophagy which contributes to regulate mitochondrial quantity and quality by eliminating the mitochondria to a basal level to fulfill cellular energy requirements and preventing excess ROS production. Required for normal mycelial growth and conidiogenesis. The protein is Ubiquitin-like modifier-activating enzyme ATG7 of Sordaria macrospora (strain ATCC MYA-333 / DSM 997 / K(L3346) / K-hell).